A 109-amino-acid chain; its full sequence is Sperm-specific class P protein 19 (109 aa).

The 109-residue stretch at 1 to 109 (MSLTADPPAC…TVTIPMSATA (109 aa)) folds into the MSP domain.

As to quaternary structure, monomer. As to expression, expressed at higher level in testis.

This is Sperm-specific class P protein 19 (ssp-19) from Caenorhabditis elegans.